We begin with the raw amino-acid sequence, 428 residues long: Secernin-2 (428 aa).

Cys-10 is an active-site residue.

It belongs to the peptidase C69 family. Secernin subfamily.

The protein is Secernin-2 (scrn2) of Xenopus laevis (African clawed frog).